The following is a 128-amino-acid chain: Large-conductance mechanosensitive channel (128 aa).

Residues 1–16 are Cytoplasmic-facing; it reads MNFIKEFREFAMRGNV. The chain crosses the membrane as a helical span at residues 17–45; it reads VDMAVGVIIGSAFGKIVSSLVSDIFTPVL. The Periplasmic segment spans residues 46 to 74; the sequence is GILTGGIDFKDMKFVLAQAQGDVPAVTLN. The chain crosses the membrane as a helical span at residues 75–94; it reads YGLFIQNVIDFIIIAFAIFM. At 95–128 the chain is on the cytoplasmic side; sequence MIKVINKVRKPEEKKTAPKAETLLTEIRDLLKNK.

Belongs to the MscL family. As to quaternary structure, homopentamer.

Its subcellular location is the cell inner membrane. Its function is as follows. Channel that opens in response to stretch forces in the membrane lipid bilayer. Forms a nonselective ion channel with a conductance of about 4 nanosiemens. May participate in the regulation of osmotic pressure changes within the cell. The polypeptide is Large-conductance mechanosensitive channel (Haemophilus influenzae (strain ATCC 51907 / DSM 11121 / KW20 / Rd)).